A 115-amino-acid chain; its full sequence is Ribonuclease P protein component (115 aa).

The protein belongs to the RnpA family. In terms of assembly, consists of a catalytic RNA component (M1 or rnpB) and a protein subunit.

It catalyses the reaction Endonucleolytic cleavage of RNA, removing 5'-extranucleotides from tRNA precursor.. Functionally, RNaseP catalyzes the removal of the 5'-leader sequence from pre-tRNA to produce the mature 5'-terminus. It can also cleave other RNA substrates such as 4.5S RNA. The protein component plays an auxiliary but essential role in vivo by binding to the 5'-leader sequence and broadening the substrate specificity of the ribozyme. This is Ribonuclease P protein component from Staphylococcus carnosus (strain TM300).